Reading from the N-terminus, the 206-residue chain is Histidine biosynthesis bifunctional protein HisIE (206 aa).

Residues 1–114 (MLKKINFIDI…FQVPSENLFF (114 aa)) are phosphoribosyl-AMP cyclohydrolase. The interval 115-206 (LHDLDCMLKF…NLKMRSNKQV (92 aa)) is phosphoribosyl-ATP pyrophosphohydrolase.

It in the N-terminal section; belongs to the PRA-CH family. In the C-terminal section; belongs to the PRA-PH family.

It localises to the cytoplasm. The enzyme catalyses 1-(5-phospho-beta-D-ribosyl)-ATP + H2O = 1-(5-phospho-beta-D-ribosyl)-5'-AMP + diphosphate + H(+). It catalyses the reaction 1-(5-phospho-beta-D-ribosyl)-5'-AMP + H2O = 1-(5-phospho-beta-D-ribosyl)-5-[(5-phospho-beta-D-ribosylamino)methylideneamino]imidazole-4-carboxamide. The protein operates within amino-acid biosynthesis; L-histidine biosynthesis; L-histidine from 5-phospho-alpha-D-ribose 1-diphosphate: step 2/9. Its pathway is amino-acid biosynthesis; L-histidine biosynthesis; L-histidine from 5-phospho-alpha-D-ribose 1-diphosphate: step 3/9. This Buchnera aphidicola subsp. Baizongia pistaciae (strain Bp) protein is Histidine biosynthesis bifunctional protein HisIE (hisI).